Consider the following 142-residue polypeptide: UPF0102 protein Bcep1808_0248 (142 aa).

Belongs to the UPF0102 family.

The polypeptide is UPF0102 protein Bcep1808_0248 (Burkholderia vietnamiensis (strain G4 / LMG 22486) (Burkholderia cepacia (strain R1808))).